Here is a 297-residue protein sequence, read N- to C-terminus: Protease HtpX homolog (297 aa).

2 helical membrane-spanning segments follow: residues 14-34 and 39-59; these read IFLI…AGYL and YQFG…SMIF. Position 143 (His143) interacts with Zn(2+). The active site involves Glu144. Position 147 (His147) interacts with Zn(2+). The next 2 helical transmembrane spans lie at 153–173 and 196–216; these read IRIS…ASMG and IVFL…ASMV. Glu225 provides a ligand contact to Zn(2+).

This sequence belongs to the peptidase M48B family. Requires Zn(2+) as cofactor.

The protein localises to the cell membrane. The polypeptide is Protease HtpX homolog (Streptococcus uberis (strain ATCC BAA-854 / 0140J)).